The sequence spans 89 residues: Large ribosomal subunit protein bL28 (89 aa).

It belongs to the bacterial ribosomal protein bL28 family.

The protein is Large ribosomal subunit protein bL28 of Chlamydia trachomatis serovar L2 (strain ATCC VR-902B / DSM 19102 / 434/Bu).